Here is a 373-residue protein sequence, read N- to C-terminus: MALKELLGSDAPLEKVCSALLEYESKRKSSENIDSESKKTNLLEDEQDDIEPVWLQLATLKFIGNNRKLIPYKIAIKNPVIPSSSEACLIVKDPQRVYKDLVNEAGLSKVVTRVIGLSKLKAKWNSYEQKRQLRDQFDIFLADDRVIPMLPRILGKTFYQKSKVPVPVKISKGTAEQLKREVVSAYGATYFNSAPCSSFMIKCGHVSNTSTELAENVESILQFVSKHIVPDGAKGIASIHLKTSQSIAIPLWNNPNLKELIASSRKVVTKETASSKRKSDEESLPSQKKQKKVEVAKESKDSKQQNVSDKKQVTVKEVPKKLSVKNAAKTTNRDEDSKGKKAKASPKVSQSSLKANGTTAIKKVKAGKNKVKH.

The disordered stretch occupies residues 265 to 373 (RKVVTKETAS…VKAGKNKVKH (109 aa)). Positions 292–320 (KVEVAKESKDSKQQNVSDKKQVTVKEVPK) are enriched in basic and acidic residues. Residues 347–359 (KVSQSSLKANGTT) show a composition bias toward polar residues. Over residues 362–373 (KKVKAGKNKVKH) the composition is skewed to basic residues.

This sequence belongs to the universal ribosomal protein uL1 family. Highly divergent. Component of the 90S pre-ribosomes.

The protein localises to the nucleus. It is found in the nucleolus. Involved in rRNA-processing and ribosome biosynthesis. This Schizosaccharomyces pombe (strain 972 / ATCC 24843) (Fission yeast) protein is Putative ribosome biogenesis protein C8F11.04.